We begin with the raw amino-acid sequence, 328 residues long: Small neutral protease regulatory protein (328 aa).

The 60-residue stretch at 1-60 folds into the HTH lysR-type domain; sequence MELEVRHLRALCAIADAGSLHRAARRLGVAQPTLSTQLTRIEQALGGPLFTRERTGCRPT. Residues 20–39 constitute a DNA-binding region (H-T-H motif); the sequence is LHRAARRLGVAQPTLSTQLT.

This sequence belongs to the LysR transcriptional regulatory family.

In terms of biological role, transcriptional trans-activator of the gene (mprA) for the small neutral protease. This is Small neutral protease regulatory protein (mprR) from Streptomyces coelicolor (strain ATCC BAA-471 / A3(2) / M145).